Here is a 209-residue protein sequence, read N- to C-terminus: 60S ribosomal subunit assembly/export protein loc-1 (209 aa).

Disordered regions lie at residues 1–53 and 135–209; these read MAPT…SKGR and REAR…AAPE. Composition is skewed to basic and acidic residues over residues 20 to 33 and 135 to 159; these read GSKDAERSRNDGVL and REARRAEAEKKEAERKARLEETKDS. The stretch at 126–170 forms a coiled coil; sequence IKARQMEEIREARRAEAEKKEAERKARLEETKDSLRKKRKRSKQS.

The protein belongs to the LOC1 family. Component of the 66S pre-ribosomal particle.

The protein localises to the nucleus. Its subcellular location is the nucleolus. Functionally, required for efficient assembly and nuclear export of the 60S ribosomal subunit. The sequence is that of 60S ribosomal subunit assembly/export protein loc-1 (loc-1) from Neurospora crassa (strain ATCC 24698 / 74-OR23-1A / CBS 708.71 / DSM 1257 / FGSC 987).